A 556-amino-acid polypeptide reads, in one-letter code: Arginine--tRNA ligase (556 aa).

Residues 132–142 (ANPTGNLHLGH) carry the 'HIGH' region motif.

The protein belongs to the class-I aminoacyl-tRNA synthetase family. Monomer.

It is found in the cytoplasm. The catalysed reaction is tRNA(Arg) + L-arginine + ATP = L-arginyl-tRNA(Arg) + AMP + diphosphate. The chain is Arginine--tRNA ligase from Bacillus licheniformis (strain ATCC 14580 / DSM 13 / JCM 2505 / CCUG 7422 / NBRC 12200 / NCIMB 9375 / NCTC 10341 / NRRL NRS-1264 / Gibson 46).